Consider the following 473-residue polypeptide: Photosystem II CP43 reaction center protein (473 aa).

Residues 1 to 14 constitute a propeptide that is removed on maturation; that stretch reads MKTLYSLRRFYPVE. Threonine 15 carries the post-translational modification N-acetylthreonine. A Phosphothreonine modification is found at threonine 15. The next 5 helical transmembrane spans lie at 69–93, 134–155, 178–200, 255–275, and 291–312; these read LFEV…PHLA, LLGP…KDRN, KALY…RKIT, KPFA…LSYS, and WFNN…ASQA. Position 367 (glutamate 367) interacts with [CaMn4O5] cluster. A helical membrane pass occupies residues 447–471; it reads RARAAAAGFEKGIDRDFEPVLSMTP.

This sequence belongs to the PsbB/PsbC family. PsbC subfamily. In terms of assembly, PSII is composed of 1 copy each of membrane proteins PsbA, PsbB, PsbC, PsbD, PsbE, PsbF, PsbH, PsbI, PsbJ, PsbK, PsbL, PsbM, PsbT, PsbX, PsbY, PsbZ, Psb30/Ycf12, at least 3 peripheral proteins of the oxygen-evolving complex and a large number of cofactors. It forms dimeric complexes. Requires Binds multiple chlorophylls and provides some of the ligands for the Ca-4Mn-5O cluster of the oxygen-evolving complex. It may also provide a ligand for a Cl- that is required for oxygen evolution. PSII binds additional chlorophylls, carotenoids and specific lipids. as cofactor.

It localises to the plastid. The protein localises to the chloroplast thylakoid membrane. Its function is as follows. One of the components of the core complex of photosystem II (PSII). It binds chlorophyll and helps catalyze the primary light-induced photochemical processes of PSII. PSII is a light-driven water:plastoquinone oxidoreductase, using light energy to abstract electrons from H(2)O, generating O(2) and a proton gradient subsequently used for ATP formation. This Amborella trichopoda protein is Photosystem II CP43 reaction center protein.